The sequence spans 165 residues: Large ribosomal subunit protein uL30 (165 aa).

It belongs to the universal ribosomal protein uL30 family. Part of the 50S ribosomal subunit.

This is Large ribosomal subunit protein uL30 from Thermoplasma volcanium (strain ATCC 51530 / DSM 4299 / JCM 9571 / NBRC 15438 / GSS1).